The following is a 201-amino-acid chain: Mediator of RNA polymerase II transcription subunit 22 (201 aa).

Residues 93 to 123 adopt a coiled-coil conformation; the sequence is SVNESINQRNQQLRTLREECDKKLIALRDDI. The interval 182-201 is disordered; that stretch reads SQIHTPPHLNGHGAGMTEHT.

Belongs to the Mediator complex subunit 22 family. As to quaternary structure, component of the Mediator complex.

The protein resides in the nucleus. In terms of biological role, component of the Mediator complex, a coactivator involved in the regulated transcription of nearly all RNA polymerase II-dependent genes. Mediator functions as a bridge to convey information from gene-specific regulatory proteins to the basal RNA polymerase II transcription machinery. Mediator is recruited to promoters by direct interactions with regulatory proteins and serves as a scaffold for the assembly of a functional preinitiation complex with RNA polymerase II and the general transcription factors. This chain is Mediator of RNA polymerase II transcription subunit 22 (med22), found in Xenopus laevis (African clawed frog).